Consider the following 209-residue polypeptide: Small ribosomal subunit protein uS4 (209 aa).

4 residues coordinate Zn(2+): cysteine 9, cysteine 12, cysteine 26, and cysteine 31. The C4-type zinc finger occupies 9–31 (CKLCRREGMKLYLKGERCYTDKC). Residues 98–161 (ARLDNVVYRM…RDLEVIKKAI (64 aa)) enclose the S4 RNA-binding domain.

Belongs to the universal ribosomal protein uS4 family. In terms of assembly, part of the 30S ribosomal subunit. Contacts protein S5. The interaction surface between S4 and S5 is involved in control of translational fidelity. The cofactor is Zn(2+).

Its function is as follows. One of the primary rRNA binding proteins, it binds directly to 16S rRNA where it nucleates assembly of the body of the 30S subunit. Functionally, with S5 and S12 plays an important role in translational accuracy. The protein is Small ribosomal subunit protein uS4 (rpsD) of Thermotoga maritima (strain ATCC 43589 / DSM 3109 / JCM 10099 / NBRC 100826 / MSB8).